The following is a 376-amino-acid chain: tRNA (guanine(26)-N(2))-dimethyltransferase (376 aa).

The Trm1 methyltransferase domain occupies 4–373 (VAVKEGLARI…APFGVVAEVM (370 aa)). Residues arginine 36, arginine 61, aspartate 78, aspartate 120, and alanine 121 each coordinate S-adenosyl-L-methionine.

It belongs to the class I-like SAM-binding methyltransferase superfamily. Trm1 family.

It carries out the reaction guanosine(26) in tRNA + 2 S-adenosyl-L-methionine = N(2)-dimethylguanosine(26) in tRNA + 2 S-adenosyl-L-homocysteine + 2 H(+). Its function is as follows. Dimethylates a single guanine residue at position 26 of a number of tRNAs using S-adenosyl-L-methionine as donor of the methyl groups. The sequence is that of tRNA (guanine(26)-N(2))-dimethyltransferase from Thermococcus kodakarensis (strain ATCC BAA-918 / JCM 12380 / KOD1) (Pyrococcus kodakaraensis (strain KOD1)).